The sequence spans 592 residues: Transcription factor MYC3 (592 aa).

A JAZ-interaction domain region spans residues 82–141; sequence STGDNTVILGWGDGYYKGEEDKEKKKNNTNTAEQEHRKRVIRELNSLISGGIGVSDESND. Disordered stretches follow at residues 261–313, 341–361, 393–422, and 465–508; these read ENDP…VENQ, CGNE…NDEG, EPPE…AERQ, and QQAE…STAS. Over residues 278 to 293 the composition is skewed to low complexity; that stretch reads SPARVNNGNNSNSNSK. A compositionally biased stretch (basic and acidic residues) spans 294-306; that stretch reads SDSHQISKLEKND. Over residues 352-361 the composition is skewed to polar residues; sequence VSKGSNNDEG. Residues 398–407 show a composition bias toward basic residues; sequence KPRKRGRKPA. Basic and acidic residues-rich tracts occupy residues 408–422 and 468–482; these read NGRE…AERQ and ESDK…DGMS. One can recognise a bHLH domain in the interval 411–460; it reads EEPLNHVEAERQRREKLNQRFYSLRAVVPNVSKMDKASLLGDAISYINEL.

In terms of assembly, homo- and heterodimer. Interacts with MYB28, MYB29, MYB34, MYB51, MYB76, MYB122, MYC2, MYC4, AFPH2/NINJA and the JAZ repressors TIFY10A/JAZ1, TIFY10B/JAZ2, TIFY6B/JAZ3, TIFY11A/JAZ5, TIFY11B/JAZ6, TIFY5B/JAZ7, TIFY5A/JAZ8, TIFY7/JAZ9, TIFY9/JAZ10, TIFY3A/JAZ11 and TIFY3B/JAZ12. As to expression, constitutively expressed in roots, stems, leaves, flowers, and seedlings.

It localises to the nucleus. Transcription factor involved in tryptophan, jasmonic acid (JA) and other stress-responsive gene regulation. With MYC2 and MYC4, controls additively subsets of JA-dependent responses. Can form complexes with all known glucosinolate-related MYBs to regulate glucosinolate biosynthesis. Binds to the G-box (5'-CACGTG-3') of promoters. Activates multiple TIFY/JAZ promoters. In Arabidopsis thaliana (Mouse-ear cress), this protein is Transcription factor MYC3 (MYC3).